Consider the following 86-residue polypeptide: Acyl carrier protein (86 aa).

One can recognise a Carrier domain in the interval 5 to 80 (EEILKKVQSI…EAVEFIIDKI (76 aa)). At Ser-40 the chain carries O-(pantetheine 4'-phosphoryl)serine.

Belongs to the acyl carrier protein (ACP) family. 4'-phosphopantetheine is transferred from CoA to a specific serine of apo-ACP by AcpS. This modification is essential for activity because fatty acids are bound in thioester linkage to the sulfhydryl of the prosthetic group.

The protein localises to the plastid. The protein resides in the chloroplast. It functions in the pathway lipid metabolism; fatty acid biosynthesis. In terms of biological role, carrier of the growing fatty acid chain in fatty acid biosynthesis. The chain is Acyl carrier protein from Cyanidium caldarium (Red alga).